The primary structure comprises 253 residues: MHEGNRSPRPMRMEAKTVKPRHPLVSRLAELLVSTWGEYLQLEPYHLPADLGFVEGQLEGDRLTIVNRCYQSRVFRKLHLELATIGPNLDILHCVMYPRPQFDLPIYGTDIVASTQMVSAAIVDLSPVRGELPPAYLAGLEPSFARCTDFGQLRNLPPWGTIFSPRCVFARVVTPTEADLFMEISRAYLRFHCEQAARAEAVDTATEAQILAGQRHYCEQQQQNDKTRRILAQAFDEAWAERYIRTVLFDLPQ.

The protein belongs to the HY2 family.

It catalyses the reaction (2R,3Z)-phycocyanobilin + 4 oxidized [2Fe-2S]-[ferredoxin] = biliverdin IXalpha + 4 reduced [2Fe-2S]-[ferredoxin] + 4 H(+). Its function is as follows. Catalyzes the four-electron reduction of biliverdin IX-alpha (2-electron reduction at both the A and D rings); the reaction proceeds via an isolatable 2-electron intermediate, 181,182-dihydrobiliverdin. This Gloeobacter violaceus (strain ATCC 29082 / PCC 7421) protein is Phycocyanobilin:ferredoxin oxidoreductase (pcyA).